Reading from the N-terminus, the 380-residue chain is MASGTTASEEERSLRECELYVQKHNIQALLKDSIVQLCTARPERPMAFLREYFEKLEKEEAKQIQNLQKAGSRADSREDEISPPPPNPVVKGRRRRGAISAEVYTEEDAASYVRKVIPKDYKTMAALAKAIEKNVLFSHLDDNERSDIFDAMFPVSFIAGETVIQQGDEGDNFYVIDQGEMDVYVNNEWATSVGEGGSFGELALIYGTPRAATVKAKTNVKLWGIDRDSYRRILMGSTLRKRKMYEEFLSKVSILESLDKWERLTVADALEPVQFEDGQKIVVQGEPGDEFFIILEGSAAVLQRRSENEEFVEVGRLGPSDYFGEIALLMNRPRAATVVARGPLKCVKLDRPRFERVLGPCSDILKRNIQQYNSFVSLSV.

The residue at position 1 (Met-1) is an N-acetylmethionine. Residue Ala-2 is modified to N-acetylalanine; in cAMP-dependent protein kinase type I-alpha regulatory subunit, N-terminally processed. Positions 2–135 are dimerization and phosphorylation; the sequence is ASGTTASEEE…ALAKAIEKNV (134 aa). Ser-3, Ser-76, and Ser-82 each carry phosphoserine. A disordered region spans residues 64–96; the sequence is IQNLQKAGSRADSREDEISPPPPNPVVKGRRRR. The Pseudophosphorylation motif motif lies at 95–99; the sequence is RRGAI. Position 100 is a phosphoserine (Ser-100). 3',5'-cyclic AMP-binding positions include 136 to 253, Glu-201, Arg-210, 254 to 380, Glu-325, and Arg-334; these read LFSH…SKVS and ILES…SLSV. Ser-257 is modified (phosphoserine).

This sequence belongs to the cAMP-dependent kinase regulatory chain family. As to quaternary structure, the inactive holoenzyme is composed of two regulatory chains and two catalytic chains. Activation by cAMP releases the two active catalytic monomers and the regulatory dimer. Interacts with PRKACA and PRKACB. PRKAR1A also interacts with RFC2; the complex may be involved in cell survival. Interacts with AKAP4. Interacts with RARA; the interaction occurs in the presence of cAMP or FSH and regulates RARA transcriptional activity. Interacts with the phosphorylated form of PJA2. Interacts with CBFA2T3. Interacts with PRKX; regulates this cAMP-dependent protein kinase. Interacts with smAKAP; this interaction may target PRKAR1A to the plasma membrane. Interacts with AICDA. In terms of processing, the pseudophosphorylation site binds to the substrate-binding region of the catalytic chain, resulting in the inhibition of its activity. The physiological significance of the in vitro phosphorylation of a proximal serine is unclear. Four types of regulatory chains are found: I-alpha, I-beta, II-alpha, and II-beta. Their expression varies among tissues and is in some cases constitutive and in others inducible.

The protein localises to the cell membrane. Regulatory subunit of the cAMP-dependent protein kinases involved in cAMP signaling in cells. This chain is cAMP-dependent protein kinase type I-alpha regulatory subunit (PRKAR1A), found in Bos taurus (Bovine).